The chain runs to 38 residues: Large ribosomal subunit protein bL36 (38 aa).

The protein belongs to the bacterial ribosomal protein bL36 family.

The protein is Large ribosomal subunit protein bL36 of Gemmatimonas aurantiaca (strain DSM 14586 / JCM 11422 / NBRC 100505 / T-27).